Consider the following 179-residue polypeptide: Monothiol glutaredoxin-S12, chloroplastic (179 aa).

The transit peptide at 1–61 (MVAATVNLAN…WPPLRCSSVK (61 aa)) directs the protein to the chloroplast. At Ala62 the chain carries N-acetylalanine. The Glutaredoxin domain occupies 75 to 176 (EETVKTTVAE…AILAEANGKN (102 aa)). Position 95 (Cys95) interacts with [2Fe-2S] cluster.

Belongs to the glutaredoxin family. CPYC subfamily.

It is found in the plastid. The protein resides in the chloroplast. May only reduce GSH-thiol disulfides, but not protein disulfides. This Arabidopsis thaliana (Mouse-ear cress) protein is Monothiol glutaredoxin-S12, chloroplastic (GRXS12).